The primary structure comprises 190 residues: Holliday junction branch migration complex subunit RuvA (190 aa).

The domain I stretch occupies residues 1–63; sequence MLDFIKGKVI…EESIEIYGFL (63 aa). The segment at 64–139 is domain II; that stretch reads ESSERDLFEE…ILPSLQYEKD (76 aa). A region of interest (flexible linker) is located at residue aspartate 139. Residues 139–190 are domain III; sequence DQKYDDILSALLNLGYKRLEAKEVLDKIYNNEKDEATIIRESLSILAGKDGK.

The protein belongs to the RuvA family. As to quaternary structure, homotetramer. Forms an RuvA(8)-RuvB(12)-Holliday junction (HJ) complex. HJ DNA is sandwiched between 2 RuvA tetramers; dsDNA enters through RuvA and exits via RuvB. An RuvB hexamer assembles on each DNA strand where it exits the tetramer. Each RuvB hexamer is contacted by two RuvA subunits (via domain III) on 2 adjacent RuvB subunits; this complex drives branch migration. In the full resolvosome a probable DNA-RuvA(4)-RuvB(12)-RuvC(2) complex forms which resolves the HJ.

Its subcellular location is the cytoplasm. Its function is as follows. The RuvA-RuvB-RuvC complex processes Holliday junction (HJ) DNA during genetic recombination and DNA repair, while the RuvA-RuvB complex plays an important role in the rescue of blocked DNA replication forks via replication fork reversal (RFR). RuvA specifically binds to HJ cruciform DNA, conferring on it an open structure. The RuvB hexamer acts as an ATP-dependent pump, pulling dsDNA into and through the RuvAB complex. HJ branch migration allows RuvC to scan DNA until it finds its consensus sequence, where it cleaves and resolves the cruciform DNA. In Thermodesulfovibrio yellowstonii (strain ATCC 51303 / DSM 11347 / YP87), this protein is Holliday junction branch migration complex subunit RuvA.